The following is a 528-amino-acid chain: Peptide chain release factor 3 (528 aa).

One can recognise a tr-type G domain in the interval 11–279 (EKRRTFAIIS…GLVEWAPKPL (269 aa)). GTP contacts are provided by residues 20–27 (SHPDAGKT), 88–92 (DTPGH), and 142–145 (NKCD).

This sequence belongs to the TRAFAC class translation factor GTPase superfamily. Classic translation factor GTPase family. PrfC subfamily.

It localises to the cytoplasm. In terms of biological role, increases the formation of ribosomal termination complexes and stimulates activities of RF-1 and RF-2. It binds guanine nucleotides and has strong preference for UGA stop codons. It may interact directly with the ribosome. The stimulation of RF-1 and RF-2 is significantly reduced by GTP and GDP, but not by GMP. This chain is Peptide chain release factor 3, found in Psychromonas ingrahamii (strain DSM 17664 / CCUG 51855 / 37).